The primary structure comprises 385 residues: Homoserine O-succinyltransferase (385 aa).

The AB hydrolase-1 domain maps to 51-359; that stretch reads NAILICHALS…EATEGHDAFL (309 aa). The Nucleophile role is filled by serine 157. Arginine 227 serves as a coordination point for substrate. Catalysis depends on residues aspartate 322 and histidine 355. Aspartate 356 serves as a coordination point for substrate.

The protein belongs to the AB hydrolase superfamily. MetX family. In terms of assembly, homodimer.

The protein localises to the cytoplasm. The enzyme catalyses L-homoserine + succinyl-CoA = O-succinyl-L-homoserine + CoA. It participates in amino-acid biosynthesis; L-methionine biosynthesis via de novo pathway; O-succinyl-L-homoserine from L-homoserine: step 1/1. Its function is as follows. Transfers a succinyl group from succinyl-CoA to L-homoserine, forming succinyl-L-homoserine. In Marinomonas sp. (strain MWYL1), this protein is Homoserine O-succinyltransferase.